Consider the following 250-residue polypeptide: DNA repair protein RecO (250 aa).

This sequence belongs to the RecO family.

Functionally, involved in DNA repair and RecF pathway recombination. In Rhodopseudomonas palustris (strain TIE-1), this protein is DNA repair protein RecO.